A 296-amino-acid polypeptide reads, in one-letter code: 4-diphosphocytidyl-2-C-methyl-D-erythritol kinase (296 aa).

Lys-19 is an active-site residue. 102-112 (PMGAGLGGGSS) contributes to the ATP binding site. Asp-144 is a catalytic residue.

The protein belongs to the GHMP kinase family. IspE subfamily.

It catalyses the reaction 4-CDP-2-C-methyl-D-erythritol + ATP = 4-CDP-2-C-methyl-D-erythritol 2-phosphate + ADP + H(+). It functions in the pathway isoprenoid biosynthesis; isopentenyl diphosphate biosynthesis via DXP pathway; isopentenyl diphosphate from 1-deoxy-D-xylulose 5-phosphate: step 3/6. Catalyzes the phosphorylation of the position 2 hydroxy group of 4-diphosphocytidyl-2C-methyl-D-erythritol. The polypeptide is 4-diphosphocytidyl-2-C-methyl-D-erythritol kinase (Burkholderia pseudomallei (strain 1710b)).